The chain runs to 905 residues: DNA gyrase subunit A (905 aa).

One can recognise a Topo IIA-type catalytic domain in the interval Ile35–Leu524. Residue Tyr123 is the O-(5'-phospho-DNA)-tyrosine intermediate of the active site. The GyrA-box signature appears at Gln551–Gly557.

It belongs to the type II topoisomerase GyrA/ParC subunit family. Heterotetramer, composed of two GyrA and two GyrB chains. In the heterotetramer, GyrA contains the active site tyrosine that forms a transient covalent intermediate with DNA, while GyrB binds cofactors and catalyzes ATP hydrolysis.

The protein resides in the cytoplasm. The catalysed reaction is ATP-dependent breakage, passage and rejoining of double-stranded DNA.. A type II topoisomerase that negatively supercoils closed circular double-stranded (ds) DNA in an ATP-dependent manner to modulate DNA topology and maintain chromosomes in an underwound state. Negative supercoiling favors strand separation, and DNA replication, transcription, recombination and repair, all of which involve strand separation. Also able to catalyze the interconversion of other topological isomers of dsDNA rings, including catenanes and knotted rings. Type II topoisomerases break and join 2 DNA strands simultaneously in an ATP-dependent manner. The sequence is that of DNA gyrase subunit A from Rickettsia prowazekii (strain Madrid E).